The following is a 518-amino-acid chain: DNA-(apurinic or apyrimidinic site) endonuclease 2 (518 aa).

Mg(2+)-binding residues include asparagine 8 and glutamate 48. Tyrosine 156 is an active-site residue. Residues aspartate 197, asparagine 199, aspartate 303, and histidine 304 each contribute to the Mg(2+) site. The active-site Proton donor/acceptor is the aspartate 197. Histidine 304 serves as the catalytic Proton acceptor. The span at 355–405 (STLQHNNQTRVQTCQNKAQVRSTRPQPSQVGSSRGQKNLKSYFQPSPSCPQ) shows a compositional bias: polar residues. The segment at 355–407 (STLQHNNQTRVQTCQNKAQVRSTRPQPSQVGSSRGQKNLKSYFQPSPSCPQAS) is disordered. Lysine 371 participates in a covalent cross-link: Glycyl lysine isopeptide (Lys-Gly) (interchain with G-Cter in ubiquitin). The required for the interaction and colocalization with PCNA in nuclear foci in presence of oxidative-induced DNA damaging agents stretch occupies residues 390-397 (QKNLKSYF). Zn(2+)-binding residues include cysteine 469, histidine 472, cysteine 495, and cysteine 509. The GRF-type zinc finger occupies 469-518 (CGGHREPCVMRTVKKPGPNLGRRFYMCARPRGPPTDPSSRCNFFLWSRPS).

It belongs to the DNA repair enzymes AP/ExoA family. Interacts with PCNA; this interaction is triggered by reactive oxygen species and increased by misincorporation of uracil in nuclear DNA. The cofactor is Mg(2+). It depends on Mn(2+) as a cofactor. Post-translationally, ubiquitinated by the CUL9-RBX1 complex. Ubiquitinated by MKRN3 at Lys-371 leading to proteasomal degradation. As to expression, highly expressed in brain and kidney. Weakly expressed in the fetal brain.

It is found in the nucleus. It localises to the cytoplasm. Its subcellular location is the mitochondrion. It catalyses the reaction Exonucleolytic cleavage in the 3'- to 5'-direction to yield nucleoside 5'-phosphates.. Its activity is regulated as follows. 3'-5' exonuclease activity is activated by sodium and manganese. 3'-5' exonuclease and 3'-phosphodiesterase activities are stimulated in presence of PCNA. Functionally, functions as a weak apurinic/apyrimidinic (AP) endodeoxyribonuclease in the DNA base excision repair (BER) pathway of DNA lesions induced by oxidative and alkylating agents. Initiates repair of AP sites in DNA by catalyzing hydrolytic incision of the phosphodiester backbone immediately adjacent to the damage, generating a single-strand break with 5'-deoxyribose phosphate and 3'-hydroxyl ends. Also displays double-stranded DNA 3'-5' exonuclease, 3'-phosphodiesterase activities. Shows robust 3'-5' exonuclease activity on 3'-recessed heteroduplex DNA and is able to remove mismatched nucleotides preferentially. Also exhibits 3'-5' exonuclease activity on a single nucleotide gap containing heteroduplex DNA and on blunt-ended substrates. Shows fairly strong 3'-phosphodiesterase activity involved in the removal of 3'-damaged termini formed in DNA by oxidative agents. In the nucleus functions in the PCNA-dependent BER pathway. Plays a role in reversing blocked 3' DNA ends, problematic lesions that preclude DNA synthesis. Required for somatic hypermutation (SHM) and DNA cleavage step of class switch recombination (CSR) of immunoglobulin genes. Required for proper cell cycle progression during proliferation of peripheral lymphocytes. This chain is DNA-(apurinic or apyrimidinic site) endonuclease 2 (APEX2), found in Homo sapiens (Human).